Reading from the N-terminus, the 383-residue chain is Cytochrome b (383 aa).

4 consecutive transmembrane segments (helical) span residues 32–52 (FGSLLAVCLVIQILTGCFLAM), 76–98 (WLIRYTHANVASFFFIFVYCHIA), 113–133 (TWSIGVIILILMMAIAFLGYV), and 179–199 (FFSLHYILPFLLAALAVAHMI). Residues H82 and H96 each contribute to the heme b site. Residues H183 and H197 each contribute to the heme b site. H202 is a binding site for a ubiquinone. 4 helical membrane-spanning segments follow: residues 225 to 245 (FIFKDLVTIFAFLLVLSIFVC), 289 to 309 (LLGVIAMFGSLLILLVLPLTD), 321 to 341 (LMKLSFWFFVVDFIILMWIGA), and 348 to 368 (YLEVGQIATAFYFAWFVFIVP).

Belongs to the cytochrome b family. Fungal cytochrome b-c1 complex contains 10 subunits; 3 respiratory subunits, 2 core proteins and 5 low-molecular weight proteins. Cytochrome b-c1 complex is a homodimer. The cofactor is heme b.

It is found in the mitochondrion inner membrane. In terms of biological role, component of the ubiquinol-cytochrome c reductase complex (complex III or cytochrome b-c1 complex) that is part of the mitochondrial respiratory chain. The b-c1 complex mediates electron transfer from ubiquinol to cytochrome c. Contributes to the generation of a proton gradient across the mitochondrial membrane that is then used for ATP synthesis. The chain is Cytochrome b (cob) from Schizophyllum commune (Split gill fungus).